Consider the following 378-residue polypeptide: Queuine tRNA-ribosyltransferase (378 aa).

Asp-89 acts as the Proton acceptor in catalysis. Substrate is bound by residues 89–93 (DSGGF), Asp-143, Gln-187, and Gly-214. The tract at residues 245–251 (GVGKPQD) is RNA binding. Asp-264 functions as the Nucleophile in the catalytic mechanism. The RNA binding; important for wobble base 34 recognition stretch occupies residues 269-273 (TRNAR). Zn(2+) contacts are provided by Cys-302, Cys-304, Cys-307, and His-334.

This sequence belongs to the queuine tRNA-ribosyltransferase family. In terms of assembly, homodimer. Within each dimer, one monomer is responsible for RNA recognition and catalysis, while the other monomer binds to the replacement base PreQ1. The cofactor is Zn(2+).

The enzyme catalyses 7-aminomethyl-7-carbaguanine + guanosine(34) in tRNA = 7-aminomethyl-7-carbaguanosine(34) in tRNA + guanine. It functions in the pathway tRNA modification; tRNA-queuosine biosynthesis. Catalyzes the base-exchange of a guanine (G) residue with the queuine precursor 7-aminomethyl-7-deazaguanine (PreQ1) at position 34 (anticodon wobble position) in tRNAs with GU(N) anticodons (tRNA-Asp, -Asn, -His and -Tyr). Catalysis occurs through a double-displacement mechanism. The nucleophile active site attacks the C1' of nucleotide 34 to detach the guanine base from the RNA, forming a covalent enzyme-RNA intermediate. The proton acceptor active site deprotonates the incoming PreQ1, allowing a nucleophilic attack on the C1' of the ribose to form the product. After dissociation, two additional enzymatic reactions on the tRNA convert PreQ1 to queuine (Q), resulting in the hypermodified nucleoside queuosine (7-(((4,5-cis-dihydroxy-2-cyclopenten-1-yl)amino)methyl)-7-deazaguanosine). In Blochmanniella floridana, this protein is Queuine tRNA-ribosyltransferase.